The following is a 444-amino-acid chain: Argininosuccinate synthase (444 aa).

ATP-binding positions include 17–25 and Ala-43; that span reads AFSGGLDTS. Tyr-99 provides a ligand contact to L-citrulline. ATP contacts are provided by Gly-129 and Thr-131. L-aspartate-binding residues include Thr-131, Asn-135, and Asp-136. Position 135 (Asn-135) interacts with L-citrulline. Asp-136 is a binding site for ATP. Arg-139 and Ser-192 together coordinate L-citrulline. Asp-194 provides a ligand contact to ATP. 3 residues coordinate L-citrulline: Thr-201, Glu-203, and Glu-280.

Belongs to the argininosuccinate synthase family. Type 2 subfamily. As to quaternary structure, homotetramer.

Its subcellular location is the cytoplasm. The enzyme catalyses L-citrulline + L-aspartate + ATP = 2-(N(omega)-L-arginino)succinate + AMP + diphosphate + H(+). The protein operates within amino-acid biosynthesis; L-arginine biosynthesis; L-arginine from L-ornithine and carbamoyl phosphate: step 2/3. The polypeptide is Argininosuccinate synthase (Delftia acidovorans (strain DSM 14801 / SPH-1)).